Consider the following 295-residue polypeptide: Septu protein PtuB (295 aa).

Component of antiviral defense system Septu type II, composed of PtuA and PtuB. Expression of Septu type II in B.subtilis (strain BEST7003) confers resistance to phages SBSphiC and SpBeta. May be a nuclease. This chain is Septu protein PtuB, found in Bacillus mycoides (strain KBAB4) (Bacillus weihenstephanensis).